The chain runs to 349 residues: DNA integrity scanning protein DisA (349 aa).

In terms of domain architecture, DAC spans 3–143 (KQDLMDIIVK…LKYRLKNFDE (141 aa)). ATP contacts are provided by residues Gly-70, Val-88, and 101-105 (TRHRT).

Belongs to the DisA family. As to quaternary structure, homooctamer. The cofactor is Mg(2+).

The enzyme catalyses 2 ATP = 3',3'-c-di-AMP + 2 diphosphate. Its function is as follows. Participates in a DNA-damage check-point. DisA forms globular foci that rapidly scan along the chromosomes searching for lesions. Also has diadenylate cyclase activity, catalyzing the condensation of 2 ATP molecules into cyclic di-AMP (c-di-AMP). c-di-AMP likely acts as a signaling molecule that may couple DNA integrity with a cellular process. The protein is DNA integrity scanning protein DisA of Fusobacterium nucleatum subsp. nucleatum (strain ATCC 25586 / DSM 15643 / BCRC 10681 / CIP 101130 / JCM 8532 / KCTC 2640 / LMG 13131 / VPI 4355).